The chain runs to 597 residues: Peptidyl-prolyl cis-trans isomerase-like 2 (597 aa).

A U-box domain is found at 41–114 (KKLPFNFCAA…TTDSDENKGD (74 aa)). Residues 328–483 (NKGYVRMETN…NKIVIKDMII (156 aa)) enclose the PPIase cyclophilin-type domain. The span at 495-519 (KKQKEGEEERKREVARQGGTEDDRT) shows a compositional bias: basic and acidic residues. Disordered regions lie at residues 495–521 (KKQK…RTTW) and 560–597 (ATTT…FDGW).

Belongs to the cyclophilin-type PPIase family. PPIL2 subfamily.

It localises to the nucleus. It carries out the reaction [protein]-peptidylproline (omega=180) = [protein]-peptidylproline (omega=0). The catalysed reaction is S-ubiquitinyl-[E2 ubiquitin-conjugating enzyme]-L-cysteine + [acceptor protein]-L-lysine = [E2 ubiquitin-conjugating enzyme]-L-cysteine + N(6)-ubiquitinyl-[acceptor protein]-L-lysine.. It functions in the pathway protein modification; protein ubiquitination. Its function is as follows. May catalyze the cis-trans isomerization of proline imidic peptide bonds in oligopeptides thereby assisting the folding of proteins. May also function as a chaperone, playing a role in intracellular transport of proteins. May also have a protein ubiquitin ligase activity acting as an E3 ubiquitin protein ligase or as a ubiquitin-ubiquitin ligase promoting elongation of ubiquitin chains on proteins. In Neurospora crassa (strain ATCC 24698 / 74-OR23-1A / CBS 708.71 / DSM 1257 / FGSC 987), this protein is Peptidyl-prolyl cis-trans isomerase-like 2 (ppi-2).